The primary structure comprises 204 residues: Imidazoleglycerol-phosphate dehydratase (204 aa).

It belongs to the imidazoleglycerol-phosphate dehydratase family.

The protein localises to the cytoplasm. It catalyses the reaction D-erythro-1-(imidazol-4-yl)glycerol 3-phosphate = 3-(imidazol-4-yl)-2-oxopropyl phosphate + H2O. Its pathway is amino-acid biosynthesis; L-histidine biosynthesis; L-histidine from 5-phospho-alpha-D-ribose 1-diphosphate: step 6/9. The protein is Imidazoleglycerol-phosphate dehydratase of Albidiferax ferrireducens (strain ATCC BAA-621 / DSM 15236 / T118) (Rhodoferax ferrireducens).